The primary structure comprises 295 residues: Small ribosomal subunit protein uS2 (295 aa).

Residues 242-295 (APVEPTLARELAPEAPAPEAPAEEAPAAEAAPAAEAAPAAEAAPAEASSEEQAG) are disordered. Residues 264–288 (EEAPAAEAAPAAEAAPAAEAAPAEA) show a composition bias toward low complexity.

The protein belongs to the universal ribosomal protein uS2 family.

The protein is Small ribosomal subunit protein uS2 of Phenylobacterium zucineum (strain HLK1).